Reading from the N-terminus, the 264-residue chain is Putative hydroxypyruvate isomerase (264 aa).

Residues Glu-145 and Glu-243 each act as proton donor/acceptor in the active site.

This sequence belongs to the hyi family.

It carries out the reaction 3-hydroxypyruvate = 2-hydroxy-3-oxopropanoate. Functionally, catalyzes the reversible isomerization between hydroxypyruvate and 2-hydroxy-3-oxopropanoate (also termed tartronate semialdehyde). This is Putative hydroxypyruvate isomerase (Gip) from Drosophila melanogaster (Fruit fly).